The primary structure comprises 360 residues: 3-dehydroquinate synthase (360 aa).

NAD(+)-binding positions include 71–76, 105–109, 129–130, lysine 142, lysine 151, and 169–172; these read DGEQYK, GVVGD, TT, and TLNT. 3 residues coordinate Zn(2+): glutamate 184, histidine 248, and histidine 265.

Belongs to the sugar phosphate cyclases superfamily. Dehydroquinate synthase family. Co(2+) serves as cofactor. The cofactor is Zn(2+). NAD(+) is required as a cofactor.

The protein resides in the cytoplasm. The catalysed reaction is 7-phospho-2-dehydro-3-deoxy-D-arabino-heptonate = 3-dehydroquinate + phosphate. Its pathway is metabolic intermediate biosynthesis; chorismate biosynthesis; chorismate from D-erythrose 4-phosphate and phosphoenolpyruvate: step 2/7. In terms of biological role, catalyzes the conversion of 3-deoxy-D-arabino-heptulosonate 7-phosphate (DAHP) to dehydroquinate (DHQ). The protein is 3-dehydroquinate synthase of Coxiella burnetii (strain RSA 331 / Henzerling II).